Reading from the N-terminus, the 165-residue chain is Cytochrome c-type biogenesis protein CcmE (165 aa).

Topologically, residues 1–29 (MSATAEQNARNPKGKGGFARTVSQRKRKR) are cytoplasmic. A helical; Signal-anchor for type II membrane protein transmembrane segment spans residues 30–50 (LFLIGGALAVLAVAVGLMLTA). The Periplasmic portion of the chain corresponds to 51 to 165 (FNQDIRFFRT…LKKKGVWEGK (115 aa)). His-143 and Tyr-147 together coordinate heme.

It belongs to the CcmE/CycJ family.

It is found in the cell inner membrane. In terms of biological role, heme chaperone required for the biogenesis of c-type cytochromes. Transiently binds heme delivered by CcmC and transfers the heme to apo-cytochromes in a process facilitated by CcmF and CcmH. This Brucella abortus (strain S19) protein is Cytochrome c-type biogenesis protein CcmE.